A 363-amino-acid chain; its full sequence is Suberization-associated anionic peroxidase (363 aa).

The N-terminal stretch at 1 to 20 is a signal peptide; sequence MGFRLSHLSLALSFVALALA. N-linked (GlcNAc...) asparagine glycosylation occurs at asparagine 36. Cystine bridges form between cysteine 80/cysteine 159 and cysteine 111/cysteine 116. Histidine 109 (proton acceptor) is an active-site residue. Ca(2+) is bound by residues aspartate 110, valine 113, glycine 115, and aspartate 117. N-linked (GlcNAc...) asparagine glycans are attached at residues asparagine 126, asparagine 161, and asparagine 199. 2 disulfides stabilise this stretch: cysteine 166–cysteine 352 and cysteine 245–cysteine 264. Proline 208 contacts substrate. Asparagine 213 and asparagine 225 each carry an N-linked (GlcNAc...) asparagine glycan. Histidine 238 is a binding site for heme b. Threonine 239 contacts Ca(2+). N-linked (GlcNAc...) asparagine glycosylation occurs at asparagine 263. Residues aspartate 277, threonine 279, and aspartate 284 each contribute to the Ca(2+) site.

It belongs to the peroxidase family. Classical plant (class III) peroxidase subfamily. Ca(2+) is required as a cofactor. The cofactor is heme b.

It is found in the secreted. The catalysed reaction is 2 a phenolic donor + H2O2 = 2 a phenolic radical donor + 2 H2O. Its function is as follows. Removal of H(2)O(2), oxidation of toxic reductants, biosynthesis and degradation of lignin, suberization, auxin catabolism, response to environmental stresses such as wounding, pathogen attack and oxidative stress. These functions might be dependent on each isozyme/isoform in each plant tissue. In terms of biological role, suggested to catalyze the deposition of the aromatic residues of suberin on the cell wall and thus play a role in cell-suberization. In Solanum tuberosum (Potato), this protein is Suberization-associated anionic peroxidase.